Consider the following 113-residue polypeptide: Mini zinc finger protein 3 (113 aa).

The ZF-HD dimerization-type; degenerate zinc finger occupies tyrosine 24–valine 83. Residues aspartate 93–glutamate 113 form a disordered region. The span at glycine 97 to glutamate 113 shows a compositional bias: low complexity.

As to quaternary structure, homo- and heterodimers.

The protein resides in the cytoplasm. Functionally, inhibits zinc finger homeodomain (ZHD) transcription factors, by interacting with them to prevent both their nuclear localization and their DNA-binding properties. This is Mini zinc finger protein 3 (MIF3) from Oryza sativa subsp. indica (Rice).